A 201-amino-acid polypeptide reads, in one-letter code: MLNQLRPALVLLVALTAVTGLAYPLAVTGIAGALFPAKAAGSLIERDGRIIGSSLIGQSFTGEGYFHGRPSATNAADPADASKTVPAPYNAASSAGSNLGPTSAALAERVKGDLAALKAENPGRPVPVDLVTTSGSGLDPDISPEAALFQVPRIARARNLPEARLRDLVAGQVQGRTLGLLGEPRVNVLALNLVLDDLAKR.

Residues 10 to 30 (VLLVALTAVTGLAYPLAVTGI) traverse the membrane as a helical segment.

The protein belongs to the KdpC family. The system is composed of three essential subunits: KdpA, KdpB and KdpC.

The protein resides in the cell inner membrane. Functionally, part of the high-affinity ATP-driven potassium transport (or Kdp) system, which catalyzes the hydrolysis of ATP coupled with the electrogenic transport of potassium into the cytoplasm. This subunit acts as a catalytic chaperone that increases the ATP-binding affinity of the ATP-hydrolyzing subunit KdpB by the formation of a transient KdpB/KdpC/ATP ternary complex. This chain is Potassium-transporting ATPase KdpC subunit, found in Methylorubrum extorquens (strain PA1) (Methylobacterium extorquens).